Consider the following 208-residue polypeptide: Protein-L-isoaspartate O-methyltransferase (208 aa).

S59 is a catalytic residue.

This sequence belongs to the methyltransferase superfamily. L-isoaspartyl/D-aspartyl protein methyltransferase family.

Its subcellular location is the cytoplasm. The enzyme catalyses [protein]-L-isoaspartate + S-adenosyl-L-methionine = [protein]-L-isoaspartate alpha-methyl ester + S-adenosyl-L-homocysteine. Catalyzes the methyl esterification of L-isoaspartyl residues in peptides and proteins that result from spontaneous decomposition of normal L-aspartyl and L-asparaginyl residues. It plays a role in the repair and/or degradation of damaged proteins. The sequence is that of Protein-L-isoaspartate O-methyltransferase from Salmonella arizonae (strain ATCC BAA-731 / CDC346-86 / RSK2980).